Reading from the N-terminus, the 249-residue chain is Elongation factor Ts (249 aa).

An involved in Mg(2+) ion dislocation from EF-Tu region spans residues 82 to 85 (TDFV). The interval 215–249 (QAGQLAPEAESTTETADATSETTTEKSSAKKKKKK) is disordered. Low complexity predominate over residues 222-236 (EAESTTETADATSET).

The protein belongs to the EF-Ts family.

It is found in the cytoplasm. Its function is as follows. Associates with the EF-Tu.GDP complex and induces the exchange of GDP to GTP. It remains bound to the aminoacyl-tRNA.EF-Tu.GTP complex up to the GTP hydrolysis stage on the ribosome. The chain is Elongation factor Ts from Rippkaea orientalis (strain PCC 8801 / RF-1) (Cyanothece sp. (strain PCC 8801)).